We begin with the raw amino-acid sequence, 157 residues long: Protein Smg homolog (157 aa).

It belongs to the Smg family.

This Alkalilimnicola ehrlichii (strain ATCC BAA-1101 / DSM 17681 / MLHE-1) protein is Protein Smg homolog.